The primary structure comprises 63 residues: MPQKFEQMQSAEQKHDEDETIAQAGTQIDDTVDALDAVLDDIESVLESNAEEYVGSFVQKGGE.

Polar residues predominate over residues 1–11 (MPQKFEQMQSA). The disordered stretch occupies residues 1–28 (MPQKFEQMQSAEQKHDEDETIAQAGTQI). Positions 19-57 (ETIAQAGTQIDDTVDALDAVLDDIESVLESNAEEYVGSF) are ARC ATPase binding. Glu-63 is covalently cross-linked (Isoglutamyl lysine isopeptide (Glu-Lys) (interchain with K-? in acceptor proteins)).

Belongs to the prokaryotic ubiquitin-like protein family. As to quaternary structure, strongly interacts with the proteasome-associated ATPase ARC through a hydrophobic interface; the interacting region of Pup lies in its C-terminal half. There is one Pup binding site per ARC hexamer ring.

It participates in protein degradation; proteasomal Pup-dependent pathway. Protein modifier that is covalently attached to lysine residues of substrate proteins, thereby targeting them for proteasomal degradation. The tagging system is termed pupylation. In Bifidobacterium adolescentis (strain ATCC 15703 / DSM 20083 / NCTC 11814 / E194a), this protein is Prokaryotic ubiquitin-like protein Pup (pup).